Here is a 776-residue protein sequence, read N- to C-terminus: Ent-8-alpha-hydroxylabd-13-en-15-yl diphosphate synthase CPS4, chloroplastic (776 aa).

A chloroplast-targeting transit peptide spans 1–60 (MSFASNATGFRIPLTTCVYPSPILRFNAKVGSGSSYGTTEAQRNMKCVDGIGRSRVVAVA). Residue Lys226 coordinates substrate. Residues Asp357 and Asp359 each contribute to the Mg(2+) site. Positions 357-360 (DSDD) match the DXDD motif motif. Lys443 lines the substrate pocket.

It belongs to the terpene synthase family. The cofactor is Mg(2+).

It is found in the plastid. Its subcellular location is the chloroplast. It catalyses the reaction ent-8alpha-hydroxylabd-13-en-15-yl diphosphate = (2E,6E,10E)-geranylgeranyl diphosphate + H2O. Its pathway is secondary metabolite biosynthesis; terpenoid biosynthesis. Functionally, involved in diterpenoid biosynthesis. Catalyzes the conversion of all-trans-geranylgeranyl diphosphate to ent-8alpha-hydroxylabd-13-en-15-yl diphosphate. This is Ent-8-alpha-hydroxylabd-13-en-15-yl diphosphate synthase CPS4, chloroplastic from Salvia miltiorrhiza (Chinese sage).